A 431-amino-acid polypeptide reads, in one-letter code: Gamma-glutamyl phosphate reductase (431 aa).

It belongs to the gamma-glutamyl phosphate reductase family.

It is found in the cytoplasm. The catalysed reaction is L-glutamate 5-semialdehyde + phosphate + NADP(+) = L-glutamyl 5-phosphate + NADPH + H(+). Its pathway is amino-acid biosynthesis; L-proline biosynthesis; L-glutamate 5-semialdehyde from L-glutamate: step 2/2. Functionally, catalyzes the NADPH-dependent reduction of L-glutamate 5-phosphate into L-glutamate 5-semialdehyde and phosphate. The product spontaneously undergoes cyclization to form 1-pyrroline-5-carboxylate. In Trichodesmium erythraeum (strain IMS101), this protein is Gamma-glutamyl phosphate reductase.